We begin with the raw amino-acid sequence, 83 residues long: Small ribosomal subunit protein uS17 (83 aa).

Belongs to the universal ribosomal protein uS17 family. Part of the 30S ribosomal subunit.

One of the primary rRNA binding proteins, it binds specifically to the 5'-end of 16S ribosomal RNA. The chain is Small ribosomal subunit protein uS17 from Buchnera aphidicola subsp. Acyrthosiphon pisum (strain 5A).